Consider the following 260-residue polypeptide: Proteasome subunit alpha (260 aa).

Belongs to the peptidase T1A family. The 20S proteasome core is composed of 14 alpha and 14 beta subunits that assemble into four stacked heptameric rings, resulting in a barrel-shaped structure. The two inner rings, each composed of seven catalytic beta subunits, are sandwiched by two outer rings, each composed of seven alpha subunits. The catalytic chamber with the active sites is on the inside of the barrel. Has a gated structure, the ends of the cylinder being occluded by the N-termini of the alpha-subunits. Is capped at one or both ends by the proteasome regulatory ATPase, PAN.

It localises to the cytoplasm. Its activity is regulated as follows. The formation of the proteasomal ATPase PAN-20S proteasome complex, via the docking of the C-termini of PAN into the intersubunit pockets in the alpha-rings, triggers opening of the gate for substrate entry. Interconversion between the open-gate and close-gate conformations leads to a dynamic regulation of the 20S proteasome proteolysis activity. Its function is as follows. Component of the proteasome core, a large protease complex with broad specificity involved in protein degradation. This chain is Proteasome subunit alpha, found in Thermococcus onnurineus (strain NA1).